Consider the following 434-residue polypeptide: D-amino acid dehydrogenase (434 aa).

An FAD-binding site is contributed by 3–17 (VVILGSGVVGVTSAW).

It belongs to the DadA oxidoreductase family. FAD serves as cofactor.

The enzyme catalyses a D-alpha-amino acid + A + H2O = a 2-oxocarboxylate + AH2 + NH4(+). The protein operates within amino-acid degradation; D-alanine degradation; NH(3) and pyruvate from D-alanine: step 1/1. Its function is as follows. Oxidative deamination of D-amino acids. This is D-amino acid dehydrogenase from Yersinia pseudotuberculosis serotype O:1b (strain IP 31758).